Consider the following 656-residue polypeptide: tRNA(Met) cytidine acetyltransferase TmcA (656 aa).

ATP contacts are provided by residues glutamine 145, 167–176 (GRGKSALLGM), and arginine 291. Positions 368–542 (SEGKYNRQFF…SGCYSAIALK (175 aa)) constitute an N-acetyltransferase domain. Residues 474–476 (IAV), 481–487 (QQKGIGQ), and glutamate 510 contribute to the acetyl-CoA site.

It belongs to the RNA cytidine acetyltransferase family. TmcA subfamily.

It localises to the cytoplasm. It catalyses the reaction cytidine(34) in elongator tRNA(Met) + acetyl-CoA + ATP + H2O = N(4)-acetylcytidine(34) in elongator tRNA(Met) + ADP + phosphate + CoA + H(+). Catalyzes the formation of N(4)-acetylcytidine (ac(4)C) at the wobble position of tRNA(Met), by using acetyl-CoA as an acetyl donor and ATP (or GTP). The sequence is that of tRNA(Met) cytidine acetyltransferase TmcA from Haemophilus influenzae (strain ATCC 51907 / DSM 11121 / KW20 / Rd).